A 334-amino-acid polypeptide reads, in one-letter code: Transmembrane protein 41 homolog (334 aa).

Asn43 carries N-linked (GlcNAc...) asparagine glycosylation. Residues 47 to 79 (KNKNNNIDNKKNSNNNNNNNNNNNNKNSISNNN) form a disordered region. Residue Asn83 is glycosylated (N-linked (GlcNAc...) asparagine). 6 consecutive transmembrane segments (helical) span residues 97–117 (LPLW…VFLF), 156–176 (FIVI…SIPG), 192–214 (VGFP…ISYY), 246–266 (IVFL…ASPL), 269–289 (VPIH…TFLA), and 305–325 (IFDL…ILPT).

Belongs to the TMEM41 family.

Its subcellular location is the membrane. The protein is Transmembrane protein 41 homolog of Dictyostelium discoideum (Social amoeba).